The sequence spans 317 residues: UV DNA damage endonuclease (317 aa).

It belongs to the uve1/UvsE family.

In terms of biological role, component in a DNA repair pathway. Removal of UV LIGHT damaged nucleotides. Recognizes pyrimidine dimers and cleave a phosphodiester bond immediately 5' to the lesion. The chain is UV DNA damage endonuclease from Bacillus mycoides (strain KBAB4) (Bacillus weihenstephanensis).